The primary structure comprises 65 residues: Large ribosomal subunit protein bL33 (65 aa).

Residues 19 to 40 form a disordered region; that stretch reads TVPSSKKRSAGVSRYTTEKNRR.

It belongs to the bacterial ribosomal protein bL33 family.

This Prochlorococcus marinus (strain NATL2A) protein is Large ribosomal subunit protein bL33.